We begin with the raw amino-acid sequence, 343 residues long: NAD-dependent deacetylase sir2E (343 aa).

The region spanning Tyr-27–Glu-300 is the Deacetylase sirtuin-type domain. The active-site Proton acceptor is His-152. The Zn(2+) site is built by Cys-160, Cys-165, Cys-200, and Cys-203.

The protein belongs to the sirtuin family.

It is found in the nucleus. It catalyses the reaction N(6)-acetyl-L-lysyl-[protein] + NAD(+) + H2O = 2''-O-acetyl-ADP-D-ribose + nicotinamide + L-lysyl-[protein]. NAD-dependent deacetylase, which plays an important role in the regulation of transcriptional repression. May play a role in cell cycle. When overexpressed, the cell cycle is accelerated. This chain is NAD-dependent deacetylase sir2E (sir2E), found in Dictyostelium discoideum (Social amoeba).